The chain runs to 175 residues: Protein OPG036 (175 aa).

It belongs to the poxviridae OPG036 family.

Its subcellular location is the host nucleus. Its function is as follows. Plays a role in the inhibition of host innate immune response. Within the host nucleus, inhibits activation of interferon-beta promoter by inhibiting IRF3 activation. This Homo sapiens (Human) protein is Protein OPG036 (OPG036).